The chain runs to 484 residues: Glutamate--tRNA ligase (484 aa).

A 'HIGH' region motif is present at residues 12–22 (PSPTGEPHVGT). The short motif at 253 to 257 (KLSKR) is the 'KMSKS' region element. Lysine 256 serves as a coordination point for ATP.

The protein belongs to the class-I aminoacyl-tRNA synthetase family. Glutamate--tRNA ligase type 1 subfamily. In terms of assembly, monomer.

The protein resides in the cytoplasm. The catalysed reaction is tRNA(Glu) + L-glutamate + ATP = L-glutamyl-tRNA(Glu) + AMP + diphosphate. Functionally, catalyzes the attachment of glutamate to tRNA(Glu) in a two-step reaction: glutamate is first activated by ATP to form Glu-AMP and then transferred to the acceptor end of tRNA(Glu). The protein is Glutamate--tRNA ligase of Rhizobium etli (strain CIAT 652).